A 515-amino-acid chain; its full sequence is E3 ubiquitin-protein ligase RNF38 (515 aa).

A Bipartite nuclear localization signal 1 motif is present at residues 57–71; that stretch reads DSPSPKRQRLSHSVF. Residues 73–141 form a disordered region; it reads YTSASPAPSP…LSRHNSISQD (69 aa). Polar residues predominate over residues 89–104; it reads MTSNRQPPSVRPSQHH. Positions 115 to 131 match the Bipartite nuclear localization signal 2 motif; that stretch reads RNRRSPPVRRQRGRRDR. Residues 115 to 134 are compositionally biased toward basic residues; sequence RNRRSPPVRRQRGRRDRLSR. The RING-type zinc-finger motif lies at 463–504; sequence CVVCMCDFESRQLLRVLPCNHEFHAKCVDKWLKANRTCPICR.

In terms of tissue distribution, widely expressed with highest levels in testis.

It is found in the nucleus. It catalyses the reaction S-ubiquitinyl-[E2 ubiquitin-conjugating enzyme]-L-cysteine + [acceptor protein]-L-lysine = [E2 ubiquitin-conjugating enzyme]-L-cysteine + N(6)-ubiquitinyl-[acceptor protein]-L-lysine.. Its pathway is protein modification; protein ubiquitination. Acts as an E3 ubiquitin-protein ligase able to ubiquitinate p53/TP53 which promotes its relocalization to discrete foci associated with PML nuclear bodies. Exhibits preference for UBE2D2 as a E2 enzyme. This is E3 ubiquitin-protein ligase RNF38 from Homo sapiens (Human).